Reading from the N-terminus, the 888-residue chain is Autotaxin (888 aa).

Residues 1–27 (MARRRSCQLHQVISLFTFAVGVNICLG) form the signal peptide. The propeptide at 28-35 (VTANRIKR) is removed by furin. Asn-54 carries N-linked (GlcNAc...) asparagine glycosylation. 2 SMB domains span residues 55–98 (ISGS…LKTA) and 99–143 (GGWE…GESH). 10 cysteine pairs are disulfide-bonded: Cys-59–Cys-76, Cys-63–Cys-94, Cys-74–Cys-87, Cys-80–Cys-86, Cys-103–Cys-120, Cys-108–Cys-138, Cys-118–Cys-131, Cys-124–Cys-130, Cys-149–Cys-195, and Cys-157–Cys-351. The Cell attachment site motif lies at 127 to 129 (RGD). Residues 145–502 (VDDDCEEIKT…PTFKYKTKVP (358 aa)) are phosphodiesterase. Positions 172 and 210 each coordinate Zn(2+). Thr-210 functions as the Nucleophile in the catalytic mechanism. 3 residues coordinate 1-(9Z-octadecenoyl)-sn-glycero-3-phosphate: Thr-210, Asn-231, and Asp-312. Residues Thr-210, Asn-231, and Asp-312 each coordinate 1-hexadecanoyl-sn-glycero-3-phosphate. The 1-tetradecanoyl-sn-glycerol 3-phosphate site is built by Thr-210, Asn-231, and Asp-312. Asp-312, His-316, Asp-359, and His-360 together coordinate Zn(2+). 5 disulfide bridges follow: Cys-367-Cys-469, Cys-414-Cys-831, Cys-567-Cys-692, Cys-569-Cys-677, and Cys-800-Cys-810. Residue Asn-411 is glycosylated (N-linked (GlcNAc...) asparagine). A Zn(2+)-binding site is contributed by His-475. A 1-(9Z-octadecenoyl)-sn-glycero-3-phosphate-binding site is contributed by His-475. His-475 is a binding site for 1-hexadecanoyl-sn-glycero-3-phosphate. His-475 serves as a coordination point for 1-tetradecanoyl-sn-glycerol 3-phosphate. An N-linked (GlcNAc...) asparagine glycan is attached at Asn-525. The segment at 623-888 (LYGRPAVLYR…TYLQTYESEI (266 aa)) is nuclease-like domain. Residues Asp-765, Asp-767, Asp-769, Leu-771, and Asp-773 each contribute to the Ca(2+) site. The N-linked (GlcNAc...) asparagine glycan is linked to Asn-832. A required for secretion region spans residues 855–876 (IEHLTSLDFFRKTSRSYPEILT).

It belongs to the nucleotide pyrophosphatase/phosphodiesterase family. Zn(2+) serves as cofactor. Ca(2+) is required as a cofactor. In terms of processing, N-glycosylation, but not furin-cleavage, plays a critical role on secretion and on lysoPLD activity. The interdomain disulfide bond between Cys-414 and Cys-831 is essential for catalytic activity. As to expression, detected in fetal serum (at protein level).

The protein resides in the secreted. It carries out the reaction a 1-O-alkyl-sn-glycero-3-phosphoethanolamine + H2O = a 1-O-alkyl-sn-glycero-3-phosphate + ethanolamine + H(+). The catalysed reaction is a 1-acyl-sn-glycero-3-phosphoethanolamine + H2O = a 1-acyl-sn-glycero-3-phosphate + ethanolamine + H(+). The enzyme catalyses 1-(9Z-octadecenoyl)-sn-glycero-3-phosphoethanolamine + H2O = 1-(9Z-octadecenoyl)-sn-glycero-3-phosphate + ethanolamine + H(+). It catalyses the reaction a 1-O-alkyl-sn-glycero-3-phosphocholine + H2O = a 1-O-alkyl-sn-glycero-3-phosphate + choline + H(+). It carries out the reaction 1-O-(9Z-octadecenyl)-sn-glycero-3-phosphocholine + H2O = 1-O-(9Z-octadecenyl)-sn-glycero-3-phosphate + choline + H(+). The catalysed reaction is 1-O-hexadecyl-sn-glycero-3-phosphocholine + H2O = 1-O-hexadecyl-sn-glycero-3-phosphate + choline + H(+). The enzyme catalyses a 1-O-(1Z-alkenyl)-sn-glycero-3-phosphocholine + H2O = a 1-O-(1Z-alkenyl)-sn-glycero-3-phosphate + choline + H(+). It catalyses the reaction a 1-acyl-sn-glycero-3-phosphocholine + H2O = a 1-acyl-sn-glycero-3-phosphate + choline + H(+). It carries out the reaction 1-dodecanoyl-sn-glycero-3-phosphocholine + H2O = 1-dodecanoyl-sn-glycerol 3-phosphate + choline + H(+). The catalysed reaction is 1-(9Z-octadecenoyl)-sn-glycero-3-phosphocholine + H2O = 1-(9Z-octadecenoyl)-sn-glycero-3-phosphate + choline + H(+). The enzyme catalyses 1-tetradecanoyl-sn-glycero-3-phosphocholine + H2O = 1-tetradecanoyl-sn-glycerol 3-phosphate + choline + H(+). It catalyses the reaction 1-decanoyl-sn-glycero-3-phosphocholine + H2O = 1-decanoyl-sn-glycero-3-phosphate + choline + H(+). It carries out the reaction 1-octadecanoyl-sn-glycero-3-phosphocholine + H2O = 1-octadecanoyl-sn-glycero-3-phosphate + choline + H(+). The catalysed reaction is 1-hexadecanoyl-sn-glycero-3-phosphocholine + H2O = 1-hexadecanoyl-sn-glycero-3-phosphate + choline + H(+). The enzyme catalyses 1-hexanoyl-sn-glycero-3-phosphocholine + H2O = 1-hexanoyl-sn-glycero-3-phosphate + choline + H(+). It catalyses the reaction 1-(9Z,12Z)-octadecadienoyl-sn-glycero-3-phosphocholine + H2O = 1-(9Z,12Z)-octadecadienoyl-sn-glycero-3-phosphate + choline + H(+). It carries out the reaction sphing-4-enine-phosphocholine + H2O = sphing-4-enine 1-phosphate + choline + H(+). The catalysed reaction is 1-(5Z,8Z,11Z,14Z-eicosatetraenoyl)-sn-glycero-3-phosphocholine + H2O = 1-(5Z,8Z,11Z,14Z-eicosatetraenoyl)-sn-glycero-3-phosphate + choline + H(+). The enzyme catalyses a 2-acyl-sn-glycero-3-phosphocholine + H2O = a 2-acyl-sn-glycerol 3-phosphate + choline + H(+). It catalyses the reaction a 1,2-diacyl-sn-glycero-3-phosphocholine + H2O = a 1,2-diacyl-sn-glycero-3-phosphate + choline + H(+). It carries out the reaction 1,2-dioctanoyl-sn-glycero-3-phosphocholine + H2O = 1,2-dioctanoyl-sn-glycero-3-phosphate + choline + H(+). The catalysed reaction is 1,2-didecanoyl-sn-glycero-3-phosphocholine + H2O = 1,2-didecanoyl-sn-glycero-3-phosphate + choline + H(+). The enzyme catalyses a 1-acyl-sn-glycero-3-phospho-L-serine + H2O = a 1-acyl-sn-glycero-3-phosphate + L-serine + H(+). It catalyses the reaction 1-(9Z-octadecenoyl)-sn-glycero-3-phospho-L-serine + H2O = 1-(9Z-octadecenoyl)-sn-glycero-3-phosphate + L-serine + H(+). It carries out the reaction a 2-acyl-sn-glycero-3-phospho-L-serine + H2O = a 2-acyl-sn-glycerol 3-phosphate + L-serine + H(+). In terms of biological role, secreted lysophospholipase D that hydrolyzes lysophospholipids to produce the signaling molecule lysophosphatidic acid (LPA) in extracellular fluids. Its major substrate is lysophosphatidylcholine. Can also act on sphingosylphosphorylcholine producing sphingosine-1-phosphate, a modulator of cell motility. Can hydrolyze, in vitro, bis-pNPP, to some extent pNP-TMP, and barely ATP. Involved in several motility-related processes such as angiogenesis and neurite outgrowth. Acts as an angiogenic factor by stimulating migration of smooth muscle cells and microtubule formation. Stimulates migration of melanoma cells, probably via a pertussis toxin-sensitive G protein. May have a role in induction of parturition. Possible involvement in cell proliferation and adipose tissue development. Required for LPA production in activated platelets, cleaves the sn-1 lysophospholipids to generate sn-1 lysophosphatidic acids containing predominantly 18:2 and 20:4 fatty acids. Shows a preference for the sn-1 to the sn-2 isomer of 1-O-alkyl-sn-glycero-3-phosphocholine (lyso-PAF). The polypeptide is Autotaxin (Bos taurus (Bovine)).